The chain runs to 185 residues: HTH-type transcriptional regulator SAB2452 (185 aa).

The 61-residue stretch at 6-66 (IENRQRIEEI…YVIQRDLNTF (61 aa)) folds into the HTH tetR-type domain. The H-T-H motif DNA-binding region spans 29–48 (SMNRIAKELGIGMGTLYRHF).

The polypeptide is HTH-type transcriptional regulator SAB2452 (Staphylococcus aureus (strain bovine RF122 / ET3-1)).